The chain runs to 118 residues: MSAKTKHHLRDRKVFAALLRSKRRFFSTFLMAYFMPNRVRTWRAAVSISKTKYKLAVERNLIRRQVKAIMREQFCNLNAVDVLVIINQGFLELTFKEKQTIFLNLCQKLQELDAPKPK.

The protein belongs to the RnpA family. As to quaternary structure, consists of a catalytic RNA component (M1 or rnpB) and a protein subunit.

It carries out the reaction Endonucleolytic cleavage of RNA, removing 5'-extranucleotides from tRNA precursor.. In terms of biological role, RNaseP catalyzes the removal of the 5'-leader sequence from pre-tRNA to produce the mature 5'-terminus. It can also cleave other RNA substrates such as 4.5S RNA. The protein component plays an auxiliary but essential role in vivo by binding to the 5'-leader sequence and broadening the substrate specificity of the ribozyme. The sequence is that of Ribonuclease P protein component from Mycoplasma pneumoniae (strain ATCC 29342 / M129 / Subtype 1) (Mycoplasmoides pneumoniae).